Reading from the N-terminus, the 224-residue chain is N-(5'-phosphoribosyl)anthranilate isomerase (224 aa).

Belongs to the TrpF family.

The enzyme catalyses N-(5-phospho-beta-D-ribosyl)anthranilate = 1-(2-carboxyphenylamino)-1-deoxy-D-ribulose 5-phosphate. Its pathway is amino-acid biosynthesis; L-tryptophan biosynthesis; L-tryptophan from chorismate: step 3/5. The polypeptide is N-(5'-phosphoribosyl)anthranilate isomerase (TRP1) (Saccharomyces cerevisiae (strain ATCC 204508 / S288c) (Baker's yeast)).